The primary structure comprises 114 residues: Flagellar hook-basal body complex protein FliE (114 aa).

Belongs to the FliE family.

It is found in the bacterial flagellum basal body. In Desulfitobacterium hafniense (strain DSM 10664 / DCB-2), this protein is Flagellar hook-basal body complex protein FliE.